The chain runs to 442 residues: MSEMTPREIVHELDAHIIGQKKAKRSVAVALRNRWRRMQLDADFRQEVTPKNILMIGPTGVGKTEIARRLAKLANAPFIKVEATKFTEVGYVGKEVEQIIRDLTDIAIKLTREQQMGKCRQLAEEHAEERILDALLPKPKNDWESTDTDTGSNTRQIFRKKLREGQLDDKEIDIDVAQPQIGIEIMSPPGMEEMTNQLQSLFKNMGQAPAKRRKMKIKEAFKLLIEEEAAKLVNQEDLKEQAIEMVEQHGIVFLDEIDKICKRGETSGPDVSREGVQRDLLPLVEGCTVTTKHGMVKTDHILFIASGAFQMAKPSDLIPELQGRLPIRVELDALSADDFKRILTEPHASLTEQYVALMGTEGVKVEFTESGIESIAKAAWQVNERTENIGARRLHTVMEKLMEDISYEASDKSGSAFVIDADYVSAHLDNLVQDEDLSRFIL.

ATP-binding positions include isoleucine 18, 60-65 (GVGKTE), aspartate 255, glutamate 320, and arginine 392.

This sequence belongs to the ClpX chaperone family. HslU subfamily. As to quaternary structure, a double ring-shaped homohexamer of HslV is capped on each side by a ring-shaped HslU homohexamer. The assembly of the HslU/HslV complex is dependent on binding of ATP.

It localises to the cytoplasm. ATPase subunit of a proteasome-like degradation complex; this subunit has chaperone activity. The binding of ATP and its subsequent hydrolysis by HslU are essential for unfolding of protein substrates subsequently hydrolyzed by HslV. HslU recognizes the N-terminal part of its protein substrates and unfolds these before they are guided to HslV for hydrolysis. The sequence is that of ATP-dependent protease ATPase subunit HslU from Shewanella sp. (strain W3-18-1).